We begin with the raw amino-acid sequence, 267 residues long: Transcription factor Spi-B (267 aa).

The interval 1-31 (MLALEAAQLDGPHLSCLYPEGVFYDLDSCKP) is TAD1 (Acidic). Residues 41–62 (LDSTWGWTEAPPAPAIAPYEAF) form a TAD2 region. Positions 174-257 (LRLYQFLLGL…VKRKLTYQFD (84 aa)) form a DNA-binding region, ETS.

The protein belongs to the ETS family. Can form homotypic interactions. Interacts with IRF4/Pip. Interacts with JUN. Interacts with TBP. May also interact with CREBBP and EP300. Interacts with NONO/p54(nrb). Expressed in the medulla of the thymus, the spleen and germinal centers of the lymph nodes. Expressed in B-cells and T-cells, expression increases during B-cell maturation and decreases during T-cell maturation.

Its subcellular location is the nucleus. Functionally, sequence specific transcriptional activator which binds to the PU-box, a purine-rich DNA sequence (5'-GAGGAA-3') that can act as a lymphoid-specific enhancer. Promotes development of plasmacytoid dendritic cells (pDCs), also known as type 2 DC precursors (pre-DC2) or natural interferon (IFN)-producing cells. These cells have the capacity to produce large amounts of interferon and block viral replication. Required for B-cell receptor (BCR) signaling, which is necessary for normal B-cell development and antigenic stimulation. The chain is Transcription factor Spi-B (Spib) from Mus musculus (Mouse).